The primary structure comprises 348 residues: Spermatogenesis-associated protein 32 (348 aa).

Residues 27–36 (YHHHHHPLED) show a composition bias toward basic and acidic residues. The tract at residues 27-61 (YHHHHHPLEDNKDEDNEMGTELSSMKPPPKVDPDP) is disordered. A phosphoserine mark is found at Ser149 and Ser152. Residues 308-329 (APATSPELQEDKDDSVPGTKKG) are disordered. Thr330 is modified (phosphothreonine).

In terms of assembly, interacts with syntaxin-1 and ACTB. Abundantly expressed in testes. Expressed in germ cells, but not in Sertoli or Leydig cells of the adult testis. Localized at the acrosomal region of the round and elongated spermatids at stages VIII-X.

In Rattus norvegicus (Rat), this protein is Spermatogenesis-associated protein 32 (Spata32).